The chain runs to 672 residues: Transcriptional regulator Kaiso (672 aa).

The interaction with NCOR1 stretch occupies residues 1-103 (MESRKLISAT…RSDLLDELIK (103 aa)). The tract at residues 1-136 (MESRKLISAT…SGTAQDGNTE (136 aa)) is self-association. A BTB domain is found at 32–94 (CDVTVIVEDR…IYSSKIVRVR (63 aa)). Glycyl lysine isopeptide (Lys-Gly) (interchain with G-Cter in SUMO2) cross-links involve residues Lys151 and Lys153. A Phosphothreonine modification is found at Thr251. The segment at 298–573 (LPNHMPSSIN…FMSSHIKSVH (276 aa)) is interaction with CBFA2T3. Residues 325–354 (KANEEEEEEIIDDDDDTISSSPDSAVSNTS) are disordered. The span at 328-341 (EEEEEEIIDDDDDT) shows a compositional bias: acidic residues. Glycyl lysine isopeptide (Lys-Gly) (interchain with G-Cter in SUMO2) cross-links involve residues Lys390, Lys407, Lys414, Lys449, Lys465, Lys474, and Lys479. The interval 454–672 (EGEARLENEI…EFEFIIPESY (219 aa)) is interaction with CTNND1. Positions 471 to 480 (MANKRMKVKH) match the Nuclear localization signal motif. C2H2-type zinc fingers lie at residues 494-516 (YICIVCKRSYVCLTSLRRHFNIH), 522-544 (YPCRYCEKVFPLAEYRTKHEIHH), and 550-573 (YQCLACGKSFINYQFMSSHIKSVH). The tract at residues 514-638 (NIHSWEKKYP…TTTSTQNKPM (125 aa)) is required for DNA-binding. Residues Lys539, Lys570, Lys582, Lys611, and Lys618 each participate in a glycyl lysine isopeptide (Lys-Gly) (interchain with G-Cter in SUMO2) cross-link. The disordered stretch occupies residues 616–635 (GYKVDTGKEPPVGTTTSTQN).

In terms of assembly, self-associates. Interacts with CTNND2. Interacts with CTNND1, and this interaction inhibits binding to both methylated and non-methylated DNA. Interacts with NCOR1. Interacts with KPNA2/RCH1, which may mediate nuclear import of this protein. Interacts with CBFA2T3. In terms of tissue distribution, expressed in vascular endothelium.

Its subcellular location is the nucleus. The protein resides in the cytoplasm. Transcriptional regulator with bimodal DNA-binding specificity. Binds to methylated CpG dinucleotides in the consensus sequence 5'-CGCG-3' and also binds to the non-methylated consensus sequence 5'-CTGCNA-3' also known as the consensus kaiso binding site (KBS). Recruits the N-CoR repressor complex to promote histone deacetylation and the formation of repressive chromatin structures in target gene promoters. May contribute to the repression of target genes of the Wnt signaling pathway. May also activate transcription of a subset of target genes by the recruitment of CTNND2. Represses expression of MMP7 in conjunction with transcriptional corepressors CBFA2T3, CBFA2T2 and RUNX1T1. This chain is Transcriptional regulator Kaiso (ZBTB33), found in Homo sapiens (Human).